Consider the following 124-residue polypeptide: Prefoldin subunit beta (124 aa).

It belongs to the prefoldin subunit beta family. As to quaternary structure, heterohexamer of two alpha and four beta subunits.

The protein resides in the cytoplasm. Molecular chaperone capable of stabilizing a range of proteins. Seems to fulfill an ATP-independent, HSP70-like function in archaeal de novo protein folding. The polypeptide is Prefoldin subunit beta (pfdB) (Thermoplasma volcanium (strain ATCC 51530 / DSM 4299 / JCM 9571 / NBRC 15438 / GSS1)).